Here is a 55-residue protein sequence, read N- to C-terminus: Large ribosomal subunit protein bL33 (55 aa).

Belongs to the bacterial ribosomal protein bL33 family.

In Methylocella silvestris (strain DSM 15510 / CIP 108128 / LMG 27833 / NCIMB 13906 / BL2), this protein is Large ribosomal subunit protein bL33.